The chain runs to 615 residues: MAKAVGIDLGTTNSVIAVLEGGKPVVLENAEGERVTPSVVAFRDGETLVGRMAKRQAVLNPEGTIFEIKRFIGRRFEEVQEEAKRVPYKVVPGPDGGVRVEVKGKLYTPEEISAMILRKLVEDASKKLGEKITKAVITVPAYFNNAQREATANAGRIAGLEVLRIINEPTAAALAYGLDKKGNETVLVFDLGGGTFDVTVLEIGEGVFEVKATSGDTHLGGSDMDHAIVNWLAEEFKKEHGVDLKADRQALQRLIEAAEKAKIELSSTLETTISLPFIALDPASKTPLHLEKKLTRAKFEELIQPLLKRLRGPVEQALKDAGLTPAQIDEVILVGGATRVPAVQQVVRELLGKEPNRSVNPDEVVAMGAAIQAGVLMGEVRDVVLLDVTPLSLGVETKGGVMTVLIPRNTTIPTRKCEIFTTAEHNQTAVEIHVLQGERPMAQDNKSLGRFRLEGIPPMPAGVPQIEVCFDIDANGILHVTAKERSTGREASITIQNTTTLSEEEIQRIIEEAKRHAEEDRRRREHAELKNALDSARVQAERVLQERQGAPEARARLEAAIGKAKELVERDAPDPELKAATEELLKAVEEYEKGAQAASGKGPDDVIDADYKPAD.

Phosphothreonine; by autocatalysis is present on T195. Residues 592–615 (EKGAQAASGKGPDDVIDADYKPAD) are disordered.

This sequence belongs to the heat shock protein 70 family.

Acts as a chaperone. In Thermus thermophilus (strain ATCC BAA-163 / DSM 7039 / HB27), this protein is Chaperone protein DnaK.